Consider the following 249-residue polypeptide: NAD(P)H-quinone oxidoreductase subunit K (249 aa).

C65, C66, C130, and C161 together coordinate [4Fe-4S] cluster.

The protein belongs to the complex I 20 kDa subunit family. As to quaternary structure, NDH-1 can be composed of about 15 different subunits; different subcomplexes with different compositions have been identified which probably have different functions. The cofactor is [4Fe-4S] cluster.

It localises to the cellular thylakoid membrane. The enzyme catalyses a plastoquinone + NADH + (n+1) H(+)(in) = a plastoquinol + NAD(+) + n H(+)(out). It carries out the reaction a plastoquinone + NADPH + (n+1) H(+)(in) = a plastoquinol + NADP(+) + n H(+)(out). In terms of biological role, NDH-1 shuttles electrons from an unknown electron donor, via FMN and iron-sulfur (Fe-S) centers, to quinones in the respiratory and/or the photosynthetic chain. The immediate electron acceptor for the enzyme in this species is believed to be plastoquinone. Couples the redox reaction to proton translocation, and thus conserves the redox energy in a proton gradient. Cyanobacterial NDH-1 also plays a role in inorganic carbon-concentration. This is NAD(P)H-quinone oxidoreductase subunit K from Prochlorococcus marinus (strain NATL2A).